The following is a 1167-amino-acid chain: MRKKQKLPFDKLAIALMSTSILLNAQSDIKANTVTEDTPVTEQAVETPQPTAVSEEVPSSKETKTPQTPDDAEETIADDANDLAPQAPAKTADTPATSKATIRDLNDPSQVKTLQEKAGKGAGTVVAVIDAGFDKNHEAWRLTDKTKARYQSKEDLEKAKKEHGITYGEWVNDKVAYYHDYSKDGKTAVDQEHGTHVSGILSGNAPSETKEPYRLEGAMPEAQLLLMRVEIVNGLADYARNYAQAIRDAVNLGAKVINMSFGNAALAYANLPDETKKAFDYAKSKGVSIVTSAGNDSSFGGKTRLPLADHPDYGVVGTPAAADSTLTVASYSPDKQLTETAMVKTDDQQDKEMPVLSTNRFEPNKAYDYAYANRGMKEDDFKDVKGKIALIERGDIDFKDKVANAKKAGAVGVLIYDNQDKGFPIELPNVDQMPAAFISRKDGLLLKDNPQKTITFNATPKVLPTASGTKLSRFSSWGLTADGNIKPDIAAPGQDILSSVANNKYAKLSGTSMSAPLVAGIMGLLQKQYETQYPDMTPSERLDLAKKVLMSSATALYDEDEKAYFSPRQQGAGAVDAKKASAATMYVTDKDNTSSKVHLNNVSDKFEVTVTVHNKSDKPQELYYQATVQTDKVDGKHFALAPKVLYEASWQKITIPANSSKQVTVPIDASRFSKDLLAQMKNGYFLEGFVRFKQDPTKEELMSIPYIGFRGDFGNLSAVEKPIYDSKDGSSYYHEANSDAKDQLDGDGLQFYALKNNFTALTTESNPWTIIKAVKEGVENIEDIESSEITETIFAGTFAKQDDDSHYYIHRHANGEPYAAISPNGDGNRDYVQFQGTFLRNAKNLVAEVLDKEGNVVWTSEVTEQVVKNYNNDLASTLGSTRFEKTRWDGKDKDGKVVANGTYTYRVRYTPISSGAKEQHTDFDVIVDNTTPEVATSATFSTEDRRLTLASKPKTSQPVYRERIAYTYMDEDLPTTEYISPNEDGTFTLPEEAETMEGATVPLKMSDFTYVVEDMAGNITYTPVTKLLEGHSNKPEQDGSGQTPDKKPEAKPEQDGSDQAPDKKPEAKPEQDGSGQTPDKKPETKPEKDSSGQTPGKTPQKGQPSRTLEKRSSKRALATKASTRDQLPTTNDKDTNRLHLLKLVMTTFFFGLVAHIFKTKRQKETKK.

Positions 1-31 (MRKKQKLPFDKLAIALMSTSILLNAQSDIKA) are cleaved as a signal peptide. Residues 34–52 (VTEDTPVTEQAVETPQPTA) show a composition bias toward polar residues. The tract at residues 34 to 73 (VTEDTPVTEQAVETPQPTAVSEEVPSSKETKTPQTPDDAE) is disordered. The Peptidase S8 domain maps to 99–581 (KATIRDLNDP…AGAVDAKKAS (483 aa)). Active-site charge relay system residues include aspartate 130, histidine 193, and serine 512. The disordered stretch occupies residues 1029–1133 (EGHSNKPEQD…RDQLPTTNDK (105 aa)). Repeat copies occupy residues 1034-1050 (KPEQ…KPEA), 1051-1067 (KPEQ…KPEA), 1068-1084 (KPEQ…KPET), and 1085-1101 (KPEK…TPQK). Residues 1034–1101 (KPEQDGSGQT…GQTPGKTPQK (68 aa)) form a 4 X 17 AA tandem repeats region. 2 stretches are compositionally biased toward basic and acidic residues: residues 1044 to 1071 (PDKK…KPEQ) and 1078 to 1090 (PDKK…EKDS). Polar residues-rich tracts occupy residues 1092–1106 (GQTP…QPSR) and 1120–1130 (KASTRDQLPTT). Residues 1127 to 1131 (LPTTN) carry the LPXTG sorting signal motif. Pentaglycyl murein peptidoglycan amidated threonine is present on threonine 1130. Positions 1131–1167 (NDKDTNRLHLLKLVMTTFFFGLVAHIFKTKRQKETKK) are cleaved as a propeptide — removed by sortase.

This sequence belongs to the peptidase S8 family. Cleaved by SpeB protease; leading to its degradation. Degradation by SpeB is probably strictly regulated to preserve integrity of C5a peptidase.

It localises to the secreted. The protein resides in the cell wall. It catalyses the reaction The primary cleavage site is at 67-His-|-Lys-68 in human C5a with a minor secondary cleavage site at 58-Ala-|-Ser-59.. Functionally, this virulence factor of S.pyogenes specifically cleaves the human serum chemotaxin C5a at '68-Lys-|-Asp-69' bond near its C-terminus, destroying its ability to serve as a chemoattractant. The protein is C5a peptidase (scpA) of Streptococcus pyogenes.